Consider the following 283-residue polypeptide: Stage II sporulation protein Q (283 aa).

A helical membrane pass occupies residues 22-42 (WVFPAIYLVSAAVILTAVLWY). The segment at 228–283 (EKAATQETEESIQQSSEKKDGSTEKGTEEKSGEKKDDSTDKSGSKESSTTEDTEQS) is disordered. Basic and acidic residues predominate over residues 243–271 (SEKKDGSTEKGTEEKSGEKKDDSTDKSGS).

As to quaternary structure, interacts with SpoIIIAH and SpoIIE.

The protein resides in the forespore membrane. Functionally, involved in forespore engulfment and required for anchoring membrane proteins on the forespore side of the septal membrane. Forms a channel with SpoIIIAH that is open on the forespore end and closed (or gated) on the mother cell end. This allows sigma-E-directed gene expression in the mother-cell compartment of the sporangium to trigger the activation of sigma-G forespore-specific gene expression by a pathway of intercellular signaling. This chain is Stage II sporulation protein Q (spoIIQ), found in Bacillus subtilis (strain 168).